We begin with the raw amino-acid sequence, 73 residues long: DNA-directed RNA polymerase subunit omega (73 aa).

Belongs to the RNA polymerase subunit omega family. In terms of assembly, in cyanobacteria the RNAP catalytic core is composed of 2 alpha, 1 beta, 1 beta', 1 gamma and 1 omega subunit. When a sigma factor is associated with the core the holoenzyme is formed, which can initiate transcription.

It carries out the reaction RNA(n) + a ribonucleoside 5'-triphosphate = RNA(n+1) + diphosphate. Functionally, promotes RNA polymerase assembly. Latches the N- and C-terminal regions of the beta' subunit thereby facilitating its interaction with the beta and alpha subunits. In Gloeobacter violaceus (strain ATCC 29082 / PCC 7421), this protein is DNA-directed RNA polymerase subunit omega.